A 768-amino-acid chain; its full sequence is Ral guanine nucleotide dissociation stimulator-like 1 (768 aa).

Positions 65-196 (KIRTIKAGTL…RAQNLLEQFQ (132 aa)) constitute an N-terminal Ras-GEF domain. The 270-residue stretch at 232 to 501 (SEDLVAEQLT…YALSCEIEAA (270 aa)) folds into the Ras-GEF domain. Serine 520 carries the phosphoserine modification. The segment at 530-623 (PGSTPTKEQP…PPTCNNNPKI (94 aa)) is disordered. Low complexity-rich tracts occupy residues 541 to 561 (SAASGSSGESMDSVSVSSCES) and 586 to 596 (ESSSSCSSIHS). The segment covering 597 to 621 (MDTNSSGMSSLINPLSSPPTCNNNP) has biased composition (polar residues). Positions 648-735 (DTCIIRISVE…FDFILRKKNS (88 aa)) constitute a Ras-associating domain.

As to quaternary structure, interacts with Ras.

In terms of biological role, probable guanine nucleotide exchange factor. This Mus musculus (Mouse) protein is Ral guanine nucleotide dissociation stimulator-like 1 (Rgl1).